A 437-amino-acid polypeptide reads, in one-letter code: Branched-chain amino acid transport system 2 carrier protein (437 aa).

12 helical membrane-spanning segments follow: residues 9–29 (LLAL…IIFP), 43–63 (AAFG…VALA), 80–100 (AGVA…ATPR), 117–137 (GGVP…FLVL), 149–169 (VITP…IFAP), 192–212 (GYLT…ATAI), 228–248 (MIAG…LFYL), 280–300 (LLLA…LITA), 308–328 (LLPV…LLVA), 335–355 (LISL…VLIA), 369–389 (VFVP…LGAA), and 404–424 (LADQ…LAVV).

The protein belongs to the branched chain amino acid transporter family.

It localises to the cell inner membrane. Component of the LIV-II transport system for branched-chain amino acids. BraB is specific for isoleucine, leucine and valine. The LIV-II transport system is coupled to sodium and lithium ions. The sequence is that of Branched-chain amino acid transport system 2 carrier protein (braB) from Pseudomonas aeruginosa (strain ATCC 15692 / DSM 22644 / CIP 104116 / JCM 14847 / LMG 12228 / 1C / PRS 101 / PAO1).